Consider the following 89-residue polypeptide: Ragulator complex protein LAMTOR5 homolog (89 aa).

This sequence belongs to the LAMTOR5 family. In terms of assembly, part of the Ragulator complex.

It is found in the cytoplasm. It localises to the lysosome. Its function is as follows. Regulator of the TOR pathway, a signaling cascade that promotes cell growth in response to growth factors, energy levels, and amino acids. As part of the Ragulator complex, may activate the TOR signaling cascade in response to amino acids. The polypeptide is Ragulator complex protein LAMTOR5 homolog (Dictyostelium discoideum (Social amoeba)).